A 605-amino-acid chain; its full sequence is Elongation factor 4 (605 aa).

In terms of domain architecture, tr-type G spans 11–193; it reads KRIRNFSIIA…QIVTRISPPQ (183 aa). Residues 23 to 28 and 140 to 143 contribute to the GTP site; these read DHGKST and NKVD.

It belongs to the TRAFAC class translation factor GTPase superfamily. Classic translation factor GTPase family. LepA subfamily.

It is found in the cell membrane. It catalyses the reaction GTP + H2O = GDP + phosphate + H(+). Its function is as follows. Required for accurate and efficient protein synthesis under certain stress conditions. May act as a fidelity factor of the translation reaction, by catalyzing a one-codon backward translocation of tRNAs on improperly translocated ribosomes. Back-translocation proceeds from a post-translocation (POST) complex to a pre-translocation (PRE) complex, thus giving elongation factor G a second chance to translocate the tRNAs correctly. Binds to ribosomes in a GTP-dependent manner. In Onion yellows phytoplasma (strain OY-M), this protein is Elongation factor 4.